A 239-amino-acid polypeptide reads, in one-letter code: Retrotransposon Gag-like protein 6 (239 aa).

A coiled-coil region spans residues 29–69 (LTSLRLTNSALRREASTLRAEKANLTNMLESVMAELTLLRT). A compositionally biased stretch (polar residues) spans 82-94 (PISSITSNGTRPM). 2 disordered regions span residues 82 to 106 (PISS…EPFS) and 214 to 239 (TGPC…ARNL). Over residues 228-239 (PAPALPARARNL) the composition is skewed to low complexity.

It belongs to the LDOC1 family.

The protein is Retrotransposon Gag-like protein 6 of Homo sapiens (Human).